Reading from the N-terminus, the 677-residue chain is Pannexin-2 (677 aa).

At 11–53 (MATALLAGEKLRELILPGSQDDKAGALAALLLQLKLELPFDRV) the chain is on the cytoplasmic side. The helical transmembrane segment at 54 to 74 (VTIGTVLVPILLVTLVFTKNF) threads the bilayer. The Extracellular segment spans residues 75 to 125 (AEEPIYCYTPHNFTRDQALYARGYCWTELRDALPGVDASLWPSLFEHKFLP). N-linked (GlcNAc...) asparagine glycosylation occurs at N86. A helical membrane pass occupies residues 126-146 (YALLAFAAIMYVPALGWEFLA). Residues 147–230 (STRLTSELNF…NFLAKLYLAR (84 aa)) are Cytoplasmic-facing. The chain crosses the membrane as a helical span at residues 231 to 251 (HVLILLLSVVPISYLCTYYAT). The Extracellular portion of the chain corresponds to 252–295 (QKQNEFTCALGASPDGPVGSAGPTVRVSCKLPSVQLQRIIAGVD). The helical transmembrane segment at 296–316 (IVLLCFMNLIILVNLIHLFIF) threads the bilayer. Residues 317–617 (RKSNFIFDKL…LGKADPLTIL (301 aa)) are Cytoplasmic-facing. The segment covering 394–408 (TTPTVRDSGIQTVDP) has biased composition (polar residues). Disordered regions lie at residues 394 to 425 (TTPT…PVVK) and 485 to 512 (AHHY…HTRH). Residues S593 and S604 each carry the phosphoserine modification.

The protein belongs to the pannexin family. As to quaternary structure, homoheptameric. Post-translationally, S-palmitoylated in neural stem and progenitor cells. Cleaved by CASP3 and CASP7 during apoptosis. Cleavage has no effect on it function. In terms of tissue distribution, expression is enriched in central nervous system. Expressed in suprabasal layers of skin epidermis. More aboundantly expressed in skin.

The protein resides in the cell membrane. It is found in the golgi apparatus membrane. Its subcellular location is the endoplasmic reticulum membrane. The enzyme catalyses ATP(in) = ATP(out). The catalysed reaction is chloride(in) = chloride(out). It carries out the reaction iodide(out) = iodide(in). It catalyses the reaction Na(+)(in) = Na(+)(out). The enzyme catalyses D-gluconate(in) = D-gluconate(out). Ion channel with a slight anion preference. Also able to release ATP. Plays a role in regulating neurogenesis and apoptosis in keratinocytes. The chain is Pannexin-2 (Panx2) from Mus musculus (Mouse).